The following is a 61-amino-acid chain: Large ribosomal subunit protein bL28 (61 aa).

Residues 1 to 24 (MAKDYVTGKKTTFGNKRSHSLNPT) are disordered. The segment covering 9-23 (KKTTFGNKRSHSLNP) has biased composition (polar residues).

It belongs to the bacterial ribosomal protein bL28 family.

The protein is Large ribosomal subunit protein bL28 of Lactobacillus acidophilus (strain ATCC 700396 / NCK56 / N2 / NCFM).